Here is a 209-residue protein sequence, read N- to C-terminus: Holliday junction branch migration complex subunit RuvA (209 aa).

The domain I stretch occupies residues 1–70 (MINYLRGQAI…EEQPLLYGFG (70 aa)). Residues 71–149 (TAPERELFRQ…AWRQLREATT (79 aa)) form a domain II region. A flexible linker region spans residues 150 to 158 (TITAILPAA). Positions 158 to 209 (AAILEDVQMTLLALGYSQEEIDRAMAVLSQDALFSKNTQPEDWIKGAINWLG) are domain III.

The protein belongs to the RuvA family. As to quaternary structure, homotetramer. Forms an RuvA(8)-RuvB(12)-Holliday junction (HJ) complex. HJ DNA is sandwiched between 2 RuvA tetramers; dsDNA enters through RuvA and exits via RuvB. An RuvB hexamer assembles on each DNA strand where it exits the tetramer. Each RuvB hexamer is contacted by two RuvA subunits (via domain III) on 2 adjacent RuvB subunits; this complex drives branch migration. In the full resolvosome a probable DNA-RuvA(4)-RuvB(12)-RuvC(2) complex forms which resolves the HJ.

The protein localises to the cytoplasm. The RuvA-RuvB-RuvC complex processes Holliday junction (HJ) DNA during genetic recombination and DNA repair, while the RuvA-RuvB complex plays an important role in the rescue of blocked DNA replication forks via replication fork reversal (RFR). RuvA specifically binds to HJ cruciform DNA, conferring on it an open structure. The RuvB hexamer acts as an ATP-dependent pump, pulling dsDNA into and through the RuvAB complex. HJ branch migration allows RuvC to scan DNA until it finds its consensus sequence, where it cleaves and resolves the cruciform DNA. The protein is Holliday junction branch migration complex subunit RuvA of Microcystis aeruginosa (strain NIES-843 / IAM M-2473).